We begin with the raw amino-acid sequence, 243 residues long: Small ribosomal subunit protein uS5 (243 aa).

Basic and acidic residues-rich tracts occupy residues 1-21 (MPID…EGQK) and 34-46 (LEEK…DHKG). Residues 1–85 (MPIDKKQEKN…NFKKNANKKP (85 aa)) are disordered. The 64-residue stretch at 89 to 152 (FEEKIVNIAR…KDAQNNLIRV (64 aa)) folds into the S5 DRBM domain.

This sequence belongs to the universal ribosomal protein uS5 family. In terms of assembly, part of the 30S ribosomal subunit. Contacts proteins S4 and S8.

Functionally, with S4 and S12 plays an important role in translational accuracy. Located at the back of the 30S subunit body where it stabilizes the conformation of the head with respect to the body. The chain is Small ribosomal subunit protein uS5 from Mycoplasma mobile (strain ATCC 43663 / 163K / NCTC 11711) (Mesomycoplasma mobile).